Reading from the N-terminus, the 121-residue chain is Large ribosomal subunit protein uL14c (121 aa).

Belongs to the universal ribosomal protein uL14 family. In terms of assembly, part of the 50S ribosomal subunit.

Its subcellular location is the plastid. It is found in the chloroplast. Its function is as follows. Binds to 23S rRNA. This chain is Large ribosomal subunit protein uL14c, found in Euglena gracilis.